The primary structure comprises 229 residues: Adenosylcobinamide-GDP ribazoletransferase (229 aa).

6 helical membrane-spanning segments follow: residues 31 to 51, 55 to 75, 111 to 131, 134 to 154, 176 to 196, and 208 to 228; these read AMLLAPLAALPLGLLVAAVLA, AVELPPLAVGLLAVGALAASS, AGVLATVVVAGVQAAALATLL, PLLAGALVCLSRCALWIVCCT, VAVLGGLLLSAVGGLVVLVLV, and GDVMGAAVELALAATLLAWAA.

Belongs to the CobS family. Mg(2+) is required as a cofactor.

The protein localises to the cell membrane. The enzyme catalyses alpha-ribazole + adenosylcob(III)inamide-GDP = adenosylcob(III)alamin + GMP + H(+). It catalyses the reaction alpha-ribazole 5'-phosphate + adenosylcob(III)inamide-GDP = adenosylcob(III)alamin 5'-phosphate + GMP + H(+). Its pathway is cofactor biosynthesis; adenosylcobalamin biosynthesis; adenosylcobalamin from cob(II)yrinate a,c-diamide: step 7/7. Joins adenosylcobinamide-GDP and alpha-ribazole to generate adenosylcobalamin (Ado-cobalamin). Also synthesizes adenosylcobalamin 5'-phosphate from adenosylcobinamide-GDP and alpha-ribazole 5'-phosphate. The polypeptide is Adenosylcobinamide-GDP ribazoletransferase (Nocardioides sp. (strain ATCC BAA-499 / JS614)).